Here is a 372-residue protein sequence, read N- to C-terminus: MLLFSLTAITAVLAVSAVPTPSNNKDGSTISELPENWDQTKDDNRSLFLNKSDKNDLEPYPLALSEEGNQDGYDQTVDQRFDSPQSNGELDNLIMRPELYGEPPAMEGLASAFDLQRRKRGSGTKVGGAGAATKVVTKSGSGKKNLKPEDQAALSPIDLMTQHEAQRRKRGSGTKVGGAAASAKTATKNSGGNKKNFRPISERRKRDSGLSAADVRALLNLWEAQERRKQEYANQFAADRYYGRVNPDEEQPEVDENGDLWYNEPVVIGPHDRDYPHHSYFSEQNRMALARGYPDLYQVGPNELAQRYEEARRKRQYANKMKRFMVAKKRSDNMMHQNNYRPRDDLYTLAELLRSAPRVQEQDIPVYRRLIL.

The first 17 residues, 1–17 (MLLFSLTAITAVLAVSA), serve as a signal peptide directing secretion. Disordered regions lie at residues 18–89 (VPTP…SNGE) and 136–208 (VTKS…KRDS). A compositionally biased stretch (polar residues) spans 19-31 (PTPSNNKDGSTIS). The segment covering 38 to 57 (DQTKDDNRSLFLNKSDKNDL) has biased composition (basic and acidic residues). The segment covering 72-89 (GYDQTVDQRFDSPQSNGE) has biased composition (polar residues). The span at 177-191 (GGAAASAKTATKNSG) shows a compositional bias: low complexity.

Post-translationally, may be proteolytically processed to give rise to a number of active peptides. As to expression, detected in the brain and frontal ganglion and in the axons connecting to the corpus cardiacum and corpus allatum (at protein level). Detected in the brain-subesophageal ganglion (brain-SG) complex, fat body, midgut and ovary. Expression in the brain-SG complex is 2-3 times higher than in the other tissues.

It localises to the cytoplasm. It is found in the secreted. This is Putative neuropeptide precursor protein from Bombyx mori (Silk moth).